A 357-amino-acid polypeptide reads, in one-letter code: MIRVLVVDDSAFMRNMITKFLTSNHEIAVAGTARNGEEALQKIKELRPDVITLDIEMPVMNGKETLKRIMASDPLPVVMVSSLTQQGADITIECLELGAIDFVAKPSGSISIDLYKVRDMLIEKVLTAGRVKLKGRQVPISKPAIETAKQPIVGGSDSVRFRAGKQLICIGTSTGGPRALQRVLPKLPKTLKAPVFIVQHMPKGFTASLANRLNHLSEVTVKEAENGERAKDGWVYIAPGGKNMAVGLEKGELVITLDDRDTESRHKPSVDYLFQSLASLREFEKIAVIMTGMGSDGTEGVKGLLKHGSGTVIAEAAESSVVFGMPKSVINNGLANDIKHVDEIAAAIMTYMKKERA.

Positions 3–120 constitute a Response regulatory domain; it reads RVLVVDDSAF…SIDLYKVRDM (118 aa). Asp54 bears the 4-aspartylphosphate mark. The CheB-type methylesterase domain maps to 161–355; it reads FRAGKQLICI…AAIMTYMKKE (195 aa). Residues Ser173, His200, and Asp296 contribute to the active site.

This sequence belongs to the CheB family. In terms of processing, phosphorylated by CheA. Phosphorylation of the N-terminal regulatory domain activates the methylesterase activity.

It localises to the cytoplasm. It carries out the reaction [protein]-L-glutamate 5-O-methyl ester + H2O = L-glutamyl-[protein] + methanol + H(+). The enzyme catalyses L-glutaminyl-[protein] + H2O = L-glutamyl-[protein] + NH4(+). Functionally, involved in chemotaxis. Part of a chemotaxis signal transduction system that modulates chemotaxis in response to various stimuli. Catalyzes the demethylation of specific methylglutamate residues introduced into the chemoreceptors (methyl-accepting chemotaxis proteins or MCP) by CheR. Also mediates the irreversible deamidation of specific glutamine residues to glutamic acid. This is Protein-glutamate methylesterase/protein-glutamine glutaminase from Bacillus licheniformis (strain ATCC 14580 / DSM 13 / JCM 2505 / CCUG 7422 / NBRC 12200 / NCIMB 9375 / NCTC 10341 / NRRL NRS-1264 / Gibson 46).